Here is an 85-residue protein sequence, read N- to C-terminus: uncharacterized protein (85 aa).

The N-terminal stretch at 1-21 is a signal peptide; it reads MRPLLCALAGLALLCAVGALA. Residues 22 to 35 are compositionally biased toward basic and acidic residues; sequence DGREDRGSPGDTGE. The segment at 22–85 is disordered; the sequence is DGREDRGSPG…EVVHLPGSTL (64 aa). Residues 36 to 51 show a composition bias toward low complexity; the sequence is RPAGPARGPGLEPARG.

It localises to the secreted. This is an uncharacterized protein from Homo sapiens (Human).